The following is a 322-amino-acid chain: uncharacterized protein (322 aa).

An N-terminal signal peptide occupies residues 1-32 (MRDGIGKRAASALFLCGVLVMLAVSSAIVSSA).

This is an uncharacterized protein from Bacillus subtilis (strain 168).